The chain runs to 218 residues: Adenylate kinase (218 aa).

Position 10–15 (10–15 (GAGKGT)) interacts with ATP. Residues 30 to 59 (STGNMLRAAVKAGTPLGLEAKKVMDAGGLV) are NMP. AMP is bound by residues Thr31, Arg36, 57 to 59 (GLV), 85 to 88 (GFPR), and Gln92. Residues 122–159 (GRRVHPASGRSYHVRFNPPKAEGVDDVTGEPLVQRDDD) form an LID region. Residues Arg123 and 132–133 (SY) each bind ATP. Positions 156 and 167 each coordinate AMP. Gly203 contributes to the ATP binding site.

The protein belongs to the adenylate kinase family. Monomer.

Its subcellular location is the cytoplasm. The catalysed reaction is AMP + ATP = 2 ADP. Its pathway is purine metabolism; AMP biosynthesis via salvage pathway; AMP from ADP: step 1/1. In terms of biological role, catalyzes the reversible transfer of the terminal phosphate group between ATP and AMP. Plays an important role in cellular energy homeostasis and in adenine nucleotide metabolism. This Bordetella parapertussis (strain 12822 / ATCC BAA-587 / NCTC 13253) protein is Adenylate kinase.